The primary structure comprises 152 residues: Large ribosomal subunit protein bL9 (152 aa).

It belongs to the bacterial ribosomal protein bL9 family.

Its function is as follows. Binds to the 23S rRNA. This chain is Large ribosomal subunit protein bL9, found in Microcystis aeruginosa (strain NIES-843 / IAM M-2473).